The sequence spans 478 residues: Protein nucleotidyltransferase YdiU (478 aa).

Positions 84, 86, 87, 107, 119, 120, 170, and 177 each coordinate ATP. The Proton acceptor role is filled by Asp246. Mg(2+) contacts are provided by Asn247 and Asp256. ATP is bound at residue Asp256.

This sequence belongs to the SELO family. Mg(2+) is required as a cofactor. The cofactor is Mn(2+).

The catalysed reaction is L-seryl-[protein] + ATP = 3-O-(5'-adenylyl)-L-seryl-[protein] + diphosphate. It catalyses the reaction L-threonyl-[protein] + ATP = 3-O-(5'-adenylyl)-L-threonyl-[protein] + diphosphate. The enzyme catalyses L-tyrosyl-[protein] + ATP = O-(5'-adenylyl)-L-tyrosyl-[protein] + diphosphate. It carries out the reaction L-histidyl-[protein] + UTP = N(tele)-(5'-uridylyl)-L-histidyl-[protein] + diphosphate. The catalysed reaction is L-seryl-[protein] + UTP = O-(5'-uridylyl)-L-seryl-[protein] + diphosphate. It catalyses the reaction L-tyrosyl-[protein] + UTP = O-(5'-uridylyl)-L-tyrosyl-[protein] + diphosphate. Functionally, nucleotidyltransferase involved in the post-translational modification of proteins. It can catalyze the addition of adenosine monophosphate (AMP) or uridine monophosphate (UMP) to a protein, resulting in modifications known as AMPylation and UMPylation. This Escherichia coli O1:K1 / APEC protein is Protein nucleotidyltransferase YdiU.